A 207-amino-acid chain; its full sequence is Large ribosomal subunit protein uL4 (207 aa).

Residues 47–77 (GTADTKTRAEVSGGGRKPWRQKGTGRARHGS) form a disordered region. Residues 63–77 (KPWRQKGTGRARHGS) show a composition bias toward basic residues.

This sequence belongs to the universal ribosomal protein uL4 family. In terms of assembly, part of the 50S ribosomal subunit.

In terms of biological role, one of the primary rRNA binding proteins, this protein initially binds near the 5'-end of the 23S rRNA. It is important during the early stages of 50S assembly. It makes multiple contacts with different domains of the 23S rRNA in the assembled 50S subunit and ribosome. Functionally, forms part of the polypeptide exit tunnel. This chain is Large ribosomal subunit protein uL4, found in Symbiobacterium thermophilum (strain DSM 24528 / JCM 14929 / IAM 14863 / T).